We begin with the raw amino-acid sequence, 772 residues long: MLKLFSAFRKNKIWDFNGGIHPPEMKTQSNGTPLRQVPLAQRFVIPLKQHIGAEGELCVSVGDKVLRGQPLTRGRGKMLPVHAPTSGTVTAIAPHSTAHPSALAELSVIIDADGEDCWIPRDGWADYRSRRREELIERIHQFGVAGLGGAGFPTGVKLQGGGDKIETLIINAAECEPYITADDRLMQDCAAQVVEGIRILAHILQPREILIGIEDNKPQAISMLRAVLADSHDISMRVIPTKYPSGGAKQLTYILTGKQVPHGGRSSDIGVLMQNVGTAYAVKRAVIDGEPITERVVTLTGEAIARPGNVWARLGTPVRHLLNDAGFCPSADQMVIMGGPLMGFTLPWLDVPVVKITNCLLAPSANELGEPQEEQSCIRCSACADACPADLLPQQLYWFSKGQQHDKATTHNIADCIECGACAWVCPSNIPLVQYFRQEKAEIAAIRQEEKRAAEAKARFEARQARLEREKAARLERHKSAAVQPAAKDKDAIAAALARVKEKQAQATQPIVIKAGERPDNSAIIAAREARKAQARAKQAELQQTNDAATVTDPRKTAVEAAIARAKARKLEQQQANAEPEQQVDPRKAAVEAAIARAKARKLEQQQANAEPEQQVDPRKAAVEAAIARAKARKLEQQQANAEPEEPVDPRKAAVEAAIARAKARKLEQQQANAEPEEPVDPRKAAVEAAITRAKARKLEQQQANAEPEEQVDPRKAAVAAAIARAKARKLEQQQANAEPEEQVDPRKAAVAAAIARVQAKKAVQQKVVNED.

2 4Fe-4S ferredoxin-type domains span residues 369 to 397 (GEPQEEQSCIRCSACADACPADLLPQQLY) and 407 to 436 (KATTHNIADCIECGACAWVCPSNIPLVQYF). The [4Fe-4S] cluster site is built by Cys-377, Cys-380, Cys-383, Cys-387, Cys-416, Cys-419, Cys-422, and Cys-426. 3 disordered regions span residues 602–684 (KLEQ…DPRK), 696–717 (ARKLEQQQANAEPEEQVDPRKA), and 727–746 (KARKLEQQQANAEPEEQVDP). Residues 605 to 615 (QQQANAEPEQQ) are compositionally biased toward low complexity.

Belongs to the 4Fe4S bacterial-type ferredoxin family. RnfC subfamily. In terms of assembly, the complex is composed of six subunits: RsxA, RsxB, RsxC, RsxD, RsxE and RsxG. The cofactor is [4Fe-4S] cluster.

The protein localises to the cell inner membrane. Part of a membrane-bound complex that couples electron transfer with translocation of ions across the membrane. Required to maintain the reduced state of SoxR. This Escherichia coli O157:H7 (strain EC4115 / EHEC) protein is Ion-translocating oxidoreductase complex subunit C.